The chain runs to 409 residues: Probable sodium/metabolite cotransporter BASS6, chloroplastic (409 aa).

Residues 1-49 constitute a chloroplast transit peptide; sequence MSVITTPIETLHLKSTLRLLPRAVYRSQRIQVFPPNIFSNTSLSSPLRI. 9 consecutive transmembrane segments (helical) span residues 100–120, 121–141, 170–190, 191–211, 221–241, 253–273, 285–305, 316–336, and 381–401; these read ILPHVVLASTILALIYPPSFT, WFTSRYFVPALGFLMFAVGIN, VLGFIFGLAAVSLFQLPTPIG, AGIMLVSCVSGAQLSNYATFL, IVMTSLSTATAVLVTPMLSLL, GMISSILQVVIAPIAAGLLLN, PFLPILSVLDTACCVGAPLAL, ATILLLVTMFHLSAFLAGYFL, and IPPAISTVVMSLMGFTLVLIW.

Belongs to the bile acid:sodium symporter (BASS) (TC 2.A.28) family.

The protein resides in the membrane. It is found in the plastid. It localises to the chloroplast envelope. Functionally, may function as sodium-coupled metabolite transporter across the chloroplast envelope. This is Probable sodium/metabolite cotransporter BASS6, chloroplastic (BASS6) from Arabidopsis thaliana (Mouse-ear cress).